A 559-amino-acid chain; its full sequence is Transcription factor tstO (559 aa).

The zn(2)-C6 fungal-type DNA-binding region spans 23–50 (CDACQSAKVRCGREKPTCRRCQNQGKTC). Disordered stretches follow at residues 166 to 316 (GPST…TGFS) and 453 to 477 (ASPP…ISTA). Positions 222-232 (SSESLSLEPSS) are enriched in low complexity. Residues 255-267 (TRGSQKISPNPHS) show a composition bias toward polar residues. Over residues 268 to 279 (IDSRTSSRDKSF) the composition is skewed to basic and acidic residues. Low complexity-rich tracts occupy residues 286–316 (STLG…TGFS) and 462–477 (NNNT…ISTA).

It localises to the nucleus. In terms of biological role, transcription factore; part of the gene cluster that mediates the biosynthesis of the antihypercholesterolemic agents phomoidrides which are dimeric anhydrides. Probably regulates the expression of the genes from the cluster. This Talaromyces stipitatus (strain ATCC 10500 / CBS 375.48 / QM 6759 / NRRL 1006) (Penicillium stipitatum) protein is Transcription factor tstO.